A 361-amino-acid chain; its full sequence is UDP-N-acetylglucosamine--N-acetylmuramyl-(pentapeptide) pyrophosphoryl-undecaprenol N-acetylglucosamine transferase (361 aa).

Residues 12-14 (TGG), asparagine 123, arginine 166, serine 192, and glutamine 293 contribute to the UDP-N-acetyl-alpha-D-glucosamine site.

It belongs to the glycosyltransferase 28 family. MurG subfamily.

The protein localises to the cell inner membrane. The catalysed reaction is di-trans,octa-cis-undecaprenyl diphospho-N-acetyl-alpha-D-muramoyl-L-alanyl-D-glutamyl-meso-2,6-diaminopimeloyl-D-alanyl-D-alanine + UDP-N-acetyl-alpha-D-glucosamine = di-trans,octa-cis-undecaprenyl diphospho-[N-acetyl-alpha-D-glucosaminyl-(1-&gt;4)]-N-acetyl-alpha-D-muramoyl-L-alanyl-D-glutamyl-meso-2,6-diaminopimeloyl-D-alanyl-D-alanine + UDP + H(+). It participates in cell wall biogenesis; peptidoglycan biosynthesis. In terms of biological role, cell wall formation. Catalyzes the transfer of a GlcNAc subunit on undecaprenyl-pyrophosphoryl-MurNAc-pentapeptide (lipid intermediate I) to form undecaprenyl-pyrophosphoryl-MurNAc-(pentapeptide)GlcNAc (lipid intermediate II). This is UDP-N-acetylglucosamine--N-acetylmuramyl-(pentapeptide) pyrophosphoryl-undecaprenol N-acetylglucosamine transferase from Caulobacter vibrioides (strain ATCC 19089 / CIP 103742 / CB 15) (Caulobacter crescentus).